A 442-amino-acid chain; its full sequence is NADH-quinone oxidoreductase subunit D (442 aa).

The protein belongs to the complex I 49 kDa subunit family. As to quaternary structure, NDH-1 is composed of 14 different subunits. Subunits NuoB, C, D, E, F, and G constitute the peripheral sector of the complex.

The protein resides in the cell membrane. The enzyme catalyses a quinone + NADH + 5 H(+)(in) = a quinol + NAD(+) + 4 H(+)(out). Its function is as follows. NDH-1 shuttles electrons from NADH, via FMN and iron-sulfur (Fe-S) centers, to quinones in the respiratory chain. The immediate electron acceptor for the enzyme in this species is believed to be a menaquinone. Couples the redox reaction to proton translocation (for every two electrons transferred, four hydrogen ions are translocated across the cytoplasmic membrane), and thus conserves the redox energy in a proton gradient. This Mycolicibacterium vanbaalenii (strain DSM 7251 / JCM 13017 / BCRC 16820 / KCTC 9966 / NRRL B-24157 / PYR-1) (Mycobacterium vanbaalenii) protein is NADH-quinone oxidoreductase subunit D.